The primary structure comprises 504 residues: Ribose import ATP-binding protein RbsA 3 (504 aa).

ABC transporter domains lie at 6-238 and 251-494; these read ANLK…VGRP and IGAE…MMGG. Residue 38 to 45 coordinates ATP; sequence GENGAGKS.

This sequence belongs to the ABC transporter superfamily. Ribose importer (TC 3.A.1.2.1) family. The complex is composed of an ATP-binding protein (RbsA), two transmembrane proteins (RbsC) and a solute-binding protein (RbsB).

The protein localises to the cell inner membrane. It carries out the reaction D-ribose(out) + ATP + H2O = D-ribose(in) + ADP + phosphate + H(+). In terms of biological role, part of the ABC transporter complex RbsABC involved in ribose import. Responsible for energy coupling to the transport system. The polypeptide is Ribose import ATP-binding protein RbsA 3 (Rhizobium meliloti (strain 1021) (Ensifer meliloti)).